A 75-amino-acid chain; its full sequence is Exodeoxyribonuclease 7 small subunit (75 aa).

Belongs to the XseB family. As to quaternary structure, heterooligomer composed of large and small subunits.

The protein resides in the cytoplasm. It catalyses the reaction Exonucleolytic cleavage in either 5'- to 3'- or 3'- to 5'-direction to yield nucleoside 5'-phosphates.. Its function is as follows. Bidirectionally degrades single-stranded DNA into large acid-insoluble oligonucleotides, which are then degraded further into small acid-soluble oligonucleotides. This Nostoc punctiforme (strain ATCC 29133 / PCC 73102) protein is Exodeoxyribonuclease 7 small subunit.